A 494-amino-acid polypeptide reads, in one-letter code: MIKYLYVILLGLLLSGCQPAEVVEIEASPKAQKRTVLKVGTLYGPQIYVNNSQGETGFDYEMANRFADYLGVSLEMIPFTDRKQLFKALKDNDIDIIAAGIAKTPGRGEQFKMGPTLYKVNQVLVYREGTPEPKDIGTLSGEITVMSNSSSVNTLTQLQKDYPELLWNQVNDKDNEELFALIAKGELNYTISDSNSLLINQRFLPELRAGMILEEKIEVVWLLPPKNSDKLMSQLLAFWHNEQRAGTLEHLNEKYFGHVKRFDYVDTRAFIRAIDNVLPAYRSLFETYSGELDWRKLAAASYQESHWNPNARSKTGVRGMMMLTQPTASYVGVSDRTDAEQSIRGGAIYLKDMIERLPESISDSQRIWFALAAYNIGMGHVEDARRLAVSMDMDPDAWRDVKKVLPLLQQRKYYKQTRYGYARGSQAVHYVDSIRRYYDTLVWVDNQTKKMEVIEAPVEILADKVDANDNIKQSLASDSKTNNTLKPKLGAGQP.

The first 20 residues, 1–20 (MIKYLYVILLGLLLSGCQPA), serve as a signal peptide directing secretion. Positions 21 to 259 (EVVEIEASPK…HLNEKYFGHV (239 aa)) are non-LT domain. The interval 260-494 (KRFDYVDTRA…LKPKLGAGQP (235 aa)) is LT domain. Residue E304 is part of the active site. Positions 473–485 (QSLASDSKTNNTL) are enriched in polar residues. Residues 473–494 (QSLASDSKTNNTLKPKLGAGQP) form a disordered region.

This sequence in the N-terminal section; belongs to the bacterial solute-binding protein 3 family. In the C-terminal section; belongs to the transglycosylase Slt family.

The protein resides in the cell outer membrane. It carries out the reaction Exolytic cleavage of the (1-&gt;4)-beta-glycosidic linkage between N-acetylmuramic acid (MurNAc) and N-acetylglucosamine (GlcNAc) residues in peptidoglycan, from either the reducing or the non-reducing ends of the peptidoglycan chains, with concomitant formation of a 1,6-anhydrobond in the MurNAc residue.. Murein-degrading enzyme that degrades murein glycan strands and insoluble, high-molecular weight murein sacculi, with the concomitant formation of a 1,6-anhydromuramoyl product. Lytic transglycosylases (LTs) play an integral role in the metabolism of the peptidoglycan (PG) sacculus. Their lytic action creates space within the PG sacculus to allow for its expansion as well as for the insertion of various structures such as secretion systems and flagella. This chain is Membrane-bound lytic murein transglycosylase F, found in Shewanella denitrificans (strain OS217 / ATCC BAA-1090 / DSM 15013).